We begin with the raw amino-acid sequence, 421 residues long: Serine hydroxymethyltransferase (421 aa).

(6S)-5,6,7,8-tetrahydrofolate contacts are provided by residues leucine 123 and 127-129 (GHL). Lysine 232 carries the N6-(pyridoxal phosphate)lysine modification.

Belongs to the SHMT family. Homodimer. The cofactor is pyridoxal 5'-phosphate.

Its subcellular location is the cytoplasm. The catalysed reaction is (6R)-5,10-methylene-5,6,7,8-tetrahydrofolate + glycine + H2O = (6S)-5,6,7,8-tetrahydrofolate + L-serine. It functions in the pathway one-carbon metabolism; tetrahydrofolate interconversion. The protein operates within amino-acid biosynthesis; glycine biosynthesis; glycine from L-serine: step 1/1. Its function is as follows. Catalyzes the reversible interconversion of serine and glycine with tetrahydrofolate (THF) serving as the one-carbon carrier. This reaction serves as the major source of one-carbon groups required for the biosynthesis of purines, thymidylate, methionine, and other important biomolecules. Also exhibits THF-independent aldolase activity toward beta-hydroxyamino acids, producing glycine and aldehydes, via a retro-aldol mechanism. The sequence is that of Serine hydroxymethyltransferase from Ehrlichia ruminantium (strain Gardel).